A 212-amino-acid polypeptide reads, in one-letter code: Large ribosomal subunit protein uL3 (212 aa).

The tract at residues 147–166 (GSTGQNQSPGKVFKGKKMPG) is disordered. N5-methylglutamine is present on Gln-153.

This sequence belongs to the universal ribosomal protein uL3 family. As to quaternary structure, part of the 50S ribosomal subunit. Forms a cluster with proteins L14 and L19. In terms of processing, methylated by PrmB.

One of the primary rRNA binding proteins, it binds directly near the 3'-end of the 23S rRNA, where it nucleates assembly of the 50S subunit. This is Large ribosomal subunit protein uL3 from Psychrobacter sp. (strain PRwf-1).